We begin with the raw amino-acid sequence, 148 residues long: Coactosin (148 aa).

The 134-residue stretch at 1–134 folds into the ADF-H domain; that stretch reads MSGFDLSEVA…VEDEIAAKIK (134 aa). Positions 71 to 76 match the F-loop; important for stable binding to G-actin and F-actin motif; that stretch reads DEESKR. At Ser-147 the chain carries Phosphoserine.

Belongs to the actin-binding proteins ADF family. Coactosin subfamily. In terms of assembly, interacts with 14-3-3 protein 3. In terms of processing, phosphorylation at Ser-147 appears not to affect its binding to actin; however, it may regulate phagocytosis and motility.

Its subcellular location is the cytoplasm. It localises to the cell projection. The protein localises to the phagocytic cup. It is found in the pseudopodium. The protein resides in the cell membrane. Its subcellular location is the cytoskeleton. In terms of biological role, actin-binding protein which is involved in F-actin stabilization. May play a role during phagocytosis and pseudopod formation by contributing to the maintenance of F-actin. The protein is Coactosin of Entamoeba histolytica (strain ATCC 30459 / HM-1:IMSS / ABRM).